The following is a 620-amino-acid chain: Chaperone protein HscA homolog (620 aa).

Belongs to the heat shock protein 70 family.

Chaperone involved in the maturation of iron-sulfur cluster-containing proteins. Has a low intrinsic ATPase activity which is markedly stimulated by HscB. In Pseudomonas syringae pv. tomato (strain ATCC BAA-871 / DC3000), this protein is Chaperone protein HscA homolog.